The primary structure comprises 152 residues: Ribosomal RNA large subunit methyltransferase H (152 aa).

S-adenosyl-L-methionine is bound by residues Leu65, Gly96, and 115–120 (LGPMTW).

Belongs to the RNA methyltransferase RlmH family. Homodimer.

The protein localises to the cytoplasm. It carries out the reaction pseudouridine(1915) in 23S rRNA + S-adenosyl-L-methionine = N(3)-methylpseudouridine(1915) in 23S rRNA + S-adenosyl-L-homocysteine + H(+). Its function is as follows. Specifically methylates the pseudouridine at position 1915 (m3Psi1915) in 23S rRNA. The polypeptide is Ribosomal RNA large subunit methyltransferase H (Gluconacetobacter diazotrophicus (strain ATCC 49037 / DSM 5601 / CCUG 37298 / CIP 103539 / LMG 7603 / PAl5)).